Here is a 355-residue protein sequence, read N- to C-terminus: tRNA-specific 2-thiouridylase MnmA (355 aa).

ATP-binding positions include 6–13 and Met-32; that span reads AMSGGVDS. The active-site Nucleophile is Cys-93. Cys-93 and Cys-191 form a disulfide bridge. Gly-117 lines the ATP pocket. The interval 140–142 is interaction with tRNA; sequence KDQ. Cys-191 functions as the Cysteine persulfide intermediate in the catalytic mechanism. Positions 296–297 are interaction with tRNA; it reads RY.

It belongs to the MnmA/TRMU family.

Its subcellular location is the cytoplasm. The enzyme catalyses S-sulfanyl-L-cysteinyl-[protein] + uridine(34) in tRNA + AH2 + ATP = 2-thiouridine(34) in tRNA + L-cysteinyl-[protein] + A + AMP + diphosphate + H(+). Its function is as follows. Catalyzes the 2-thiolation of uridine at the wobble position (U34) of tRNA, leading to the formation of s(2)U34. This is tRNA-specific 2-thiouridylase MnmA from Pelobacter propionicus (strain DSM 2379 / NBRC 103807 / OttBd1).